A 452-amino-acid chain; its full sequence is Phosphoglucosamine mutase (452 aa).

S109 (phosphoserine intermediate) is an active-site residue. Mg(2+) contacts are provided by S109, D248, D250, and D252. S109 is subject to Phosphoserine.

Belongs to the phosphohexose mutase family. Mg(2+) serves as cofactor. Activated by phosphorylation.

It catalyses the reaction alpha-D-glucosamine 1-phosphate = D-glucosamine 6-phosphate. Its function is as follows. Catalyzes the conversion of glucosamine-6-phosphate to glucosamine-1-phosphate. The chain is Phosphoglucosamine mutase from Erythrobacter litoralis (strain HTCC2594).